The following is a 549-amino-acid chain: Glutamyl-tRNA(Gln) amidotransferase subunit B, mitochondrial (549 aa).

A mitochondrion-targeting transit peptide spans 1–23 (MLRISRDTKIVARVTHVTKSRTY).

This sequence belongs to the GatB/GatE family. GatB subfamily. Subunit of the heterotrimeric GatFAB amidotransferase (AdT) complex, composed of A, B and F subunits.

It is found in the mitochondrion. It catalyses the reaction L-glutamyl-tRNA(Gln) + L-glutamine + ATP + H2O = L-glutaminyl-tRNA(Gln) + L-glutamate + ADP + phosphate + H(+). Allows the formation of correctly charged Gln-tRNA(Gln) through the transamidation of misacylated Glu-tRNA(Gln) in the mitochondria. The reaction takes place in the presence of glutamine and ATP through an activated gamma-phospho-Glu-tRNA(Gln). The polypeptide is Glutamyl-tRNA(Gln) amidotransferase subunit B, mitochondrial (Yarrowia lipolytica (strain CLIB 122 / E 150) (Yeast)).